Consider the following 347-residue polypeptide: Palmitoyltransferase ZDHHC11 (347 aa).

Over 1-46 the chain is Cytoplasmic; that stretch reads MKEMNICGINKNWVLPEAQENNVKKFLPRPLSRVNGWSPPLHSFQA. The chain crosses the membrane as a helical span at residues 47 to 67; it reads ISWITYLAMSIVTFGIFIPFL. Residues 68–75 are Lumenal-facing; the sequence is PYSWKYAA. A helical membrane pass occupies residues 76–96; that stretch reads NIVMGGVFIFHLIVHLIAITI. Residues 97–170 are Cytoplasmic-facing; it reads DPADTNVRLK…LNNCVGRRNY (74 aa). A DHHC domain is found at 128 to 178; that stretch reads QYCHLCEVTASKKAKHCSACNKCVSGFDHHCKWLNNCVGRRNYWFFFWSVA. Residue cysteine 158 is the S-palmitoyl cysteine intermediate of the active site. A helical membrane pass occupies residues 171-191; it reads WFFFWSVASAAVGILGVMIIL. Residues 192 to 234 lie on the Lumenal side of the membrane; it reads CYICIQYFVNPDELRTDPLYKEIISENTWLLFLSLWPVPVKTP. The chain crosses the membrane as a helical span at residues 235-255; it reads IVLSIAVMALLLAIASFVMLG. The Cytoplasmic segment spans residues 256–347; that stretch reads HLLIFHLYLI…SPPKICHSED (92 aa). The span at 291 to 306 shows a compositional bias: basic and acidic residues; that stretch reads ELPLQKKGDLPQEKSD. The segment at 291 to 332 is disordered; sequence ELPLQKKGDLPQEKSDNWAWPKSPPRVGSQKFPVSTLSPKSS. Polar residues predominate over residues 322 to 331; that stretch reads FPVSTLSPKS.

The protein belongs to the DHHC palmitoyltransferase family. As to quaternary structure, interacts with IRF3 and STING1; in presence of DNA viruses recruits IRF3 to STING1 promoting IRF3 phosphorylation and activation.

Its subcellular location is the endosome membrane. The catalysed reaction is L-cysteinyl-[protein] + hexadecanoyl-CoA = S-hexadecanoyl-L-cysteinyl-[protein] + CoA. Endoplasmic reticulum-localized palmitoyltransferase that could catalyze the addition of palmitate onto various protein substrates and be involved in a variety of cellular processes. Has a palmitoyltransferase activity toward NCDN and regulates NCDN association with endosome membranes through this palmitoylation. May play a role in cell proliferation. Its function is as follows. Also has a palmitoyltransferase activity-independent function in DNA virus-triggered and CGAS-mediated innate immune response. Functions as an adapter that recruits IRF3 to STING1 to promote the activation of that key transcriptional regulator of type I interferon (IFN)-dependent immune response. In Mus musculus (Mouse), this protein is Palmitoyltransferase ZDHHC11.